Consider the following 48-residue polypeptide: MRSRASAEGIAVLGLRRRGESPVCRRRNVVVCFWGDRSCVEREGCVRG.

C45 carries the cysteine methyl ester modification. Residue C45 is the site of S-farnesyl cysteine attachment. A propeptide spans 46 to 48 (removed in mature form); it reads VRG.

The protein localises to the cell membrane. Activates B-regulated development. In Schizophyllum commune (Split gill fungus), this protein is Mating-type pheromone BAP1(2) (BAP1(2)).